We begin with the raw amino-acid sequence, 955 residues long: Leucine-rich repeat-containing G-protein coupled receptor 4 (955 aa).

An N-terminal signal peptide occupies residues 1-21 (MGCPGWPLALFALLLASCSGG). Topologically, residues 22–547 (PSGVSSPAPC…LLGSWMIRLT (526 aa)) are extracellular. The 34-residue stretch at 26-59 (SSPAPCPAPCACDLDGGADCSGKGLVTVPDGLSV) folds into the LRRNT domain. 2 disulfide bridges follow: C31–C37 and C35–C45. 10 LRR repeats span residues 57 to 81 (LSVF…AFKG), 83 to 105 (PYLE…ALSG), 106 to 129 (LKEL…SLKG), 131 to 153 (VSLQ…SFEG), 155 to 177 (VQLR…PLSN), 178 to 201 (LPSL…AFSN), 203 to 225 (SSLV…CFHG), 226 to 249 (LDNL…IRSL), 250 to 272 (PNLK…AFVK), and 274 to 296 (PLLR…AFQN). A glycan (N-linked (GlcNAc...) asparagine) is linked at N201. N-linked (GlcNAc...) asparagine glycosylation is found at N296 and N316. LRR repeat units lie at residues 320 to 343 (TNNL…FCQE), 345 to 365 (KMLR…GFEG), 366 to 389 (CSSL…TFQG), 390 to 413 (LAAL…AFVT), and 415 to 437 (KALT…GLHG). C341 and C366 are joined by a disulfide. A glycan (N-linked (GlcNAc...) asparagine) is linked at N384. Cystine bridges form between C472/C525 and C473/C478. A helical membrane pass occupies residues 548 to 568 (VWFIFLLALIFNVIVIVTMFA). The Cytoplasmic portion of the chain corresponds to 569-578 (SCSQLTSSKL). A helical membrane pass occupies residues 579–599 (FIGLIAVSNLFMGVYTGTLTV). Over 600–623 (LDTISWGQFAEFGIWWETGNGCKV) the chain is Extracellular. Cysteines 621 and 696 form a disulfide. Residues 624–644 (AGFLAIFSSESAIFFLMLAAI) form a helical membrane-spanning segment. Residues 645–666 (ERSLSAKDIIKKEKHQHLRKFQ) are Cytoplasmic-facing. The helical transmembrane segment at 667 to 687 (VASLLAVLLAAAAGCLPLFHI) threads the bilayer. Over 688-706 (GEFSSSPLCLPFPTGETPS) the chain is Extracellular. Residues 707–727 (LGFTVTLVLLNSLAFLIMVIT) form a helical membrane-spanning segment. The Cytoplasmic portion of the chain corresponds to 728-759 (YTKLYCTIEKEDLSENAESSMIKHVAWLIFTN). The chain crosses the membrane as a helical span at residues 760–780 (CIFFCPVAFFSFAPLITAIYI). Residues 781–786 (SPEIMK) lie on the Extracellular side of the membrane. The chain crosses the membrane as a helical span at residues 787–807 (SVTLIFLPLPACLNPVLYVFF). At 808-955 (NPKFKEDWKL…YAYNIPRMKD (148 aa)) the chain is on the cytoplasmic side.

This sequence belongs to the G-protein coupled receptor 1 family.

It localises to the cell membrane. Receptor for R-spondins that potentiates the canonical Wnt signaling pathway and is involved in the formation of various organs. Upon binding to R-spondins (RSPO1, RSPO2, RSPO3 or RSPO4), associates with phosphorylated LRP6 and frizzled receptors that are activated by extracellular Wnt receptors, triggering the canonical Wnt signaling pathway to increase expression of target genes. In contrast to classical G-protein coupled receptors, does not activate heterotrimeric G-proteins to transduce the signal. Its function as activator of the Wnt signaling pathway is required for the development of various organs, including liver, kidney, intestine, bone, reproductive tract and eye. May play a role in regulating the circadian rhythms of plasma lipids. Required for proper development of GnRH neurons (gonadotropin-releasing hormone expressing neurons) that control the release of reproductive hormones from the pituitary gland. In Xenopus tropicalis (Western clawed frog), this protein is Leucine-rich repeat-containing G-protein coupled receptor 4 (lgr4).